A 40-amino-acid polypeptide reads, in one-letter code: Photosystem II reaction center protein J (40 aa).

The chain crosses the membrane as a helical span at residues 8-28; the sequence is IPLWLVATVAGLAAIGVLGIF.

Belongs to the PsbJ family. PSII is composed of 1 copy each of membrane proteins PsbA, PsbB, PsbC, PsbD, PsbE, PsbF, PsbH, PsbI, PsbJ, PsbK, PsbL, PsbM, PsbT, PsbX, PsbY, PsbZ, Psb30/Ycf12, at least 3 peripheral proteins of the oxygen-evolving complex and a large number of cofactors. It forms dimeric complexes.

It localises to the plastid. Its subcellular location is the cyanelle thylakoid membrane. Functionally, one of the components of the core complex of photosystem II (PSII). PSII is a light-driven water:plastoquinone oxidoreductase that uses light energy to abstract electrons from H(2)O, generating O(2) and a proton gradient subsequently used for ATP formation. It consists of a core antenna complex that captures photons, and an electron transfer chain that converts photonic excitation into a charge separation. In Cyanophora paradoxa, this protein is Photosystem II reaction center protein J.